An 855-amino-acid chain; its full sequence is Valine--tRNA ligase (855 aa).

A 'HIGH' region motif is present at residues 42–52 (PTISGKLHIGH). The short motif at 574–578 (KMSKS) is the 'KMSKS' region element. Residue K577 coordinates ATP.

Belongs to the class-I aminoacyl-tRNA synthetase family. ValS type 2 subfamily. In terms of assembly, monomer.

It is found in the cytoplasm. It carries out the reaction tRNA(Val) + L-valine + ATP = L-valyl-tRNA(Val) + AMP + diphosphate. In terms of biological role, catalyzes the attachment of valine to tRNA(Val). As ValRS can inadvertently accommodate and process structurally similar amino acids such as threonine, to avoid such errors, it has a 'posttransfer' editing activity that hydrolyzes mischarged Thr-tRNA(Val) in a tRNA-dependent manner. This chain is Valine--tRNA ligase, found in Wolbachia sp. subsp. Brugia malayi (strain TRS).